We begin with the raw amino-acid sequence, 258 residues long: Imidazole glycerol phosphate synthase subunit HisF (258 aa).

Active-site residues include Asp-11 and Asp-130.

It belongs to the HisA/HisF family. Heterodimer of HisH and HisF.

The protein resides in the cytoplasm. The enzyme catalyses 5-[(5-phospho-1-deoxy-D-ribulos-1-ylimino)methylamino]-1-(5-phospho-beta-D-ribosyl)imidazole-4-carboxamide + L-glutamine = D-erythro-1-(imidazol-4-yl)glycerol 3-phosphate + 5-amino-1-(5-phospho-beta-D-ribosyl)imidazole-4-carboxamide + L-glutamate + H(+). The protein operates within amino-acid biosynthesis; L-histidine biosynthesis; L-histidine from 5-phospho-alpha-D-ribose 1-diphosphate: step 5/9. Functionally, IGPS catalyzes the conversion of PRFAR and glutamine to IGP, AICAR and glutamate. The HisF subunit catalyzes the cyclization activity that produces IGP and AICAR from PRFAR using the ammonia provided by the HisH subunit. This Gluconacetobacter diazotrophicus (strain ATCC 49037 / DSM 5601 / CCUG 37298 / CIP 103539 / LMG 7603 / PAl5) protein is Imidazole glycerol phosphate synthase subunit HisF.